A 185-amino-acid chain; its full sequence is Ribosome-recycling factor (185 aa).

It belongs to the RRF family.

The protein resides in the cytoplasm. Responsible for the release of ribosomes from messenger RNA at the termination of protein biosynthesis. May increase the efficiency of translation by recycling ribosomes from one round of translation to another. The sequence is that of Ribosome-recycling factor from Listeria innocua serovar 6a (strain ATCC BAA-680 / CLIP 11262).